The chain runs to 371 residues: Solute carrier family 35 member F6 (371 aa).

The first 18 residues, Met1–Gly18, serve as a signal peptide directing secretion. 2 consecutive transmembrane segments (helical) span residues Phe48–Leu68 and Leu89–Leu109. An EamA domain is found at Leu104–Leu160. N-linked (GlcNAc...) asparagine glycosylation occurs at Asn110. Transmembrane regions (helical) follow at residues Phe117–Gly137, Leu140–Leu160, Val176–Leu196, Gly216–Gly236, Leu261–Ile281, Leu295–Trp312, and Ala317–Leu336. The interval Glu352–Ser371 is disordered. Thr365 carries the post-translational modification Phosphothreonine.

Belongs to the SLC35F solute transporter family. In terms of assembly, interacts with SLC25A5. Expressed in pancreatic ductal adenocarcinoma (PDAC) (at protein level). Strongly expressed in prostate and thyroid. Weakly expressed in lung, heart, liver and kidney.

It is found in the mitochondrion. The protein localises to the lysosome membrane. Involved in the maintenance of mitochondrial membrane potential in pancreatic ductal adenocarcinoma (PDAC) cells. Promotes pancreatic ductal adenocarcinoma (PDAC) cell growth. May play a role as a nucleotide-sugar transporter. This is Solute carrier family 35 member F6 (SLC35F6) from Homo sapiens (Human).